A 616-amino-acid chain; its full sequence is MDDHSPRDAAETPAPGPAATPAKRVYETPPTSRPITDAEAARAEKLAANEHIKIASGYLRGTLADGLLKHATGAISEDDGQLVKFHGMYLQDDRDLRPERTKKKLDKAYSFMIRLRIAGGVITPKQWLILDDIARTYAGGALRATTRQTFQYHGVIKSNLKRTMAAIDGALLDTIAACGDVNRNVMAATNPAQTGAHKAAYQLAKDISDSLLPKTSAWREIWLDGERVVGGEDEAEVEPVYGRTYLPRKFKTVVAVPPSNEVDIFAHDLGFIAILDKKNQVTGWNVTVGGGMGMTHGEPDTFPRTADVMGFVKPEDALKVAEAVMTVQRDWGNRKNRKNARLKYTIERYGLDAFRAEVEKRVGKKLGAPKPFTFTGNGDRYGWVEGDDGRHHLTLYVPSGRIKDIDGGPQFLSGLRRIAEVHQGDFRLTGNQNVIIANVPAEKRAEIDALVDEYGLTRGASALRRSSLACVALPTCGLALAESERYLPDLMTELEESLASHGLAEEEITIRSTGCPNGCARPFISEIGLVGRGPERYHLYLGAAHDGSRLSKLYKEDVAASEIRDTLDPLFADYARGRQPGEHFGDYLIRAGHVARTTNGPDFHDRTGALKPATLG.

The span at 1 to 10 shows a compositional bias: basic and acidic residues; it reads MDDHSPRDAA. Residues 1–35 are disordered; the sequence is MDDHSPRDAAETPAPGPAATPAKRVYETPPTSRPI. Low complexity predominate over residues 11 to 22; it reads ETPAPGPAATPA. Cys-470, Cys-476, Cys-515, and Cys-519 together coordinate [4Fe-4S] cluster. Cys-519 contributes to the siroheme binding site.

Belongs to the nitrite and sulfite reductase 4Fe-4S domain family. In terms of assembly, alpha(8)-beta(8). The alpha component is a flavoprotein, the beta component is a hemoprotein. Siroheme serves as cofactor. It depends on [4Fe-4S] cluster as a cofactor.

The catalysed reaction is hydrogen sulfide + 3 NADP(+) + 3 H2O = sulfite + 3 NADPH + 4 H(+). Its pathway is sulfur metabolism; hydrogen sulfide biosynthesis; hydrogen sulfide from sulfite (NADPH route): step 1/1. Its function is as follows. Component of the sulfite reductase complex that catalyzes the 6-electron reduction of sulfite to sulfide. This is one of several activities required for the biosynthesis of L-cysteine from sulfate. This Methylobacterium radiotolerans (strain ATCC 27329 / DSM 1819 / JCM 2831 / NBRC 15690 / NCIMB 10815 / 0-1) protein is Sulfite reductase [NADPH] hemoprotein beta-component.